A 494-amino-acid chain; its full sequence is Cytochrome P450 2G1 (494 aa).

Cys439 is a binding site for heme.

The protein belongs to the cytochrome P450 family. Requires heme as cofactor. In terms of tissue distribution, olfactory epithelium.

Its subcellular location is the endoplasmic reticulum membrane. It is found in the microsome membrane. It carries out the reaction an organic molecule + reduced [NADPH--hemoprotein reductase] + O2 = an alcohol + oxidized [NADPH--hemoprotein reductase] + H2O + H(+). In terms of biological role, cytochromes P450 are a group of heme-thiolate monooxygenases. This isozyme seems to be implicated in olfaction. The polypeptide is Cytochrome P450 2G1 (CYP2G1) (Oryctolagus cuniculus (Rabbit)).